We begin with the raw amino-acid sequence, 338 residues long: MKNSADITVLGAGSYGSALAISLASNGHKTLLWGHDPVHMQTLAQDKCNQAFLPGIAFPDCLQIEADLAKALAASNNVLVVVPSHVFGTVLEQAKPLLRSDARIVWATKGLEPETGRLLQDVARDVLGEQYPLAVLSGPTFAKELAMGLPTAISVAGTCPTFTNDLVELLHSPKRLRVYANDDFTGLQLGGAVKNVIAIGAGMSDGIGFGANARTALITRGLVELTRLGEALGANAATFMGMAGLGDLVLTCTDNQSRNRRFGLALGKGCDVMTAQAEIGQVVEGYRNTKEVFTLAKRLGVEMPITEQIYQVLYQGKSPVDAAKELLSREKKSETPAQ.

The NADPH site is built by Ser14, Tyr15, His35, and Lys109. Residues Lys109, Gly138, and Thr140 each contribute to the sn-glycerol 3-phosphate site. Ala142 contacts NADPH. Residues Lys194, Asp247, Ser257, Arg258, and Asn259 each contribute to the sn-glycerol 3-phosphate site. Lys194 serves as the catalytic Proton acceptor. Arg258 is an NADPH binding site. 2 residues coordinate NADPH: Val282 and Glu284.

The protein belongs to the NAD-dependent glycerol-3-phosphate dehydrogenase family.

The protein localises to the cytoplasm. It carries out the reaction sn-glycerol 3-phosphate + NAD(+) = dihydroxyacetone phosphate + NADH + H(+). It catalyses the reaction sn-glycerol 3-phosphate + NADP(+) = dihydroxyacetone phosphate + NADPH + H(+). It functions in the pathway membrane lipid metabolism; glycerophospholipid metabolism. Catalyzes the reduction of the glycolytic intermediate dihydroxyacetone phosphate (DHAP) to sn-glycerol 3-phosphate (G3P), the key precursor for phospholipid synthesis. This chain is Glycerol-3-phosphate dehydrogenase [NAD(P)+], found in Shewanella baltica (strain OS195).